The primary structure comprises 413 residues: Probable glucan 1,3-beta-glucosidase ARB_04467 (413 aa).

Residues 1–17 form the signal peptide; the sequence is MKFGSLLGLSLVGLSVA. Residues Glu46, Glu202, and Tyr262 each contribute to the substrate site. Glu202 acts as the Proton donor in catalysis. The cysteines at positions 282 and 412 are disulfide-linked. Glu300 functions as the Nucleophile in the catalytic mechanism.

The protein belongs to the glycosyl hydrolase 5 (cellulase A) family. As to quaternary structure, monomer.

Its subcellular location is the secreted. The protein resides in the cell wall. It catalyses the reaction Successive hydrolysis of beta-D-glucose units from the non-reducing ends of (1-&gt;3)-beta-D-glucans, releasing alpha-glucose.. In terms of biological role, major glucan 1,3-beta-glucosidase required for cell wall integrity. Beta-glucanases participate in the metabolism of beta-glucan, the main structural component of the cell wall. Can also function biosynthetically as a transglycosylase. Functions to deliver glucan from the cell to the extracellular matrix. Involved in cell-substrate and cell-cell adhesion. In Arthroderma benhamiae (strain ATCC MYA-4681 / CBS 112371) (Trichophyton mentagrophytes), this protein is Probable glucan 1,3-beta-glucosidase ARB_04467.